The primary structure comprises 302 residues: Sulfate adenylyltransferase subunit 2 (302 aa).

This sequence belongs to the PAPS reductase family. CysD subfamily. As to quaternary structure, heterodimer composed of CysD, the smaller subunit, and CysN.

The enzyme catalyses sulfate + ATP + H(+) = adenosine 5'-phosphosulfate + diphosphate. The protein operates within sulfur metabolism; hydrogen sulfide biosynthesis; sulfite from sulfate: step 1/3. In terms of biological role, with CysN forms the ATP sulfurylase (ATPS) that catalyzes the adenylation of sulfate producing adenosine 5'-phosphosulfate (APS) and diphosphate, the first enzymatic step in sulfur assimilation pathway. APS synthesis involves the formation of a high-energy phosphoric-sulfuric acid anhydride bond driven by GTP hydrolysis by CysN coupled to ATP hydrolysis by CysD. The protein is Sulfate adenylyltransferase subunit 2 of Shigella dysenteriae serotype 1 (strain Sd197).